The following is a 284-amino-acid chain: Bifunctional protein FolD (284 aa).

Residues 164 to 166 and Ser189 contribute to the NADP(+) site; that span reads GRS.

It belongs to the tetrahydrofolate dehydrogenase/cyclohydrolase family. Homodimer.

It carries out the reaction (6R)-5,10-methylene-5,6,7,8-tetrahydrofolate + NADP(+) = (6R)-5,10-methenyltetrahydrofolate + NADPH. The enzyme catalyses (6R)-5,10-methenyltetrahydrofolate + H2O = (6R)-10-formyltetrahydrofolate + H(+). It participates in one-carbon metabolism; tetrahydrofolate interconversion. Its function is as follows. Catalyzes the oxidation of 5,10-methylenetetrahydrofolate to 5,10-methenyltetrahydrofolate and then the hydrolysis of 5,10-methenyltetrahydrofolate to 10-formyltetrahydrofolate. This is Bifunctional protein FolD from Listeria welshimeri serovar 6b (strain ATCC 35897 / DSM 20650 / CCUG 15529 / CIP 8149 / NCTC 11857 / SLCC 5334 / V8).